The following is a 178-amino-acid chain: Photosystem I assembly protein Ycf4 (178 aa).

The next 2 helical transmembrane spans lie at 19 to 39 (FLVAAAVSVGGVGFLLASLSS) and 61 to 81 (LVMGLYSIAAALLASYLWYVI).

Belongs to the Ycf4 family.

It is found in the cellular thylakoid membrane. Its function is as follows. Seems to be required for the assembly of the photosystem I complex. This is Photosystem I assembly protein Ycf4 from Synechococcus sp. (strain CC9902).